Reading from the N-terminus, the 128-residue chain is Small ribosomal subunit protein uS9 (128 aa).

As to quaternary structure, part of the 30S ribosomal subunit. Contacts proteins S7 and S10.

Functionally, part of the top of the head of the 30S subunit. The C-terminal region penetrates the head emerging in the P-site where it contacts tRNA. The protein is Small ribosomal subunit protein uS9 (rpsI) of Thermus thermophilus (strain ATCC 27634 / DSM 579 / HB8).